The following is a 180-amino-acid chain: Bifunctional protein PyrR (180 aa).

The PRPP-binding signature appears at 101–113; sequence LIVVDDVLFTGRT.

This sequence belongs to the purine/pyrimidine phosphoribosyltransferase family. PyrR subfamily. In terms of assembly, homodimer and homohexamer; in equilibrium.

The catalysed reaction is UMP + diphosphate = 5-phospho-alpha-D-ribose 1-diphosphate + uracil. In terms of biological role, regulates transcriptional attenuation of the pyrimidine nucleotide (pyr) operon by binding in a uridine-dependent manner to specific sites on pyr mRNA. This disrupts an antiterminator hairpin in the RNA and favors formation of a downstream transcription terminator, leading to a reduced expression of downstream genes. Also displays a weak uracil phosphoribosyltransferase activity which is not physiologically significant. The sequence is that of Bifunctional protein PyrR from Bacillus pumilus (strain SAFR-032).